Consider the following 267-residue polypeptide: 4-hydroxy-tetrahydrodipicolinate reductase (267 aa).

NAD(+)-binding positions include 8 to 13 (GAAGRM) and D34. Residue R35 coordinates NADP(+). NAD(+) is bound by residues 98 to 100 (GTT) and 122 to 125 (AANF). H155 serves as the catalytic Proton donor/acceptor. A (S)-2,3,4,5-tetrahydrodipicolinate-binding site is contributed by H156. K159 acts as the Proton donor in catalysis. 165-166 (GT) is a binding site for (S)-2,3,4,5-tetrahydrodipicolinate.

This sequence belongs to the DapB family.

It is found in the cytoplasm. The catalysed reaction is (S)-2,3,4,5-tetrahydrodipicolinate + NAD(+) + H2O = (2S,4S)-4-hydroxy-2,3,4,5-tetrahydrodipicolinate + NADH + H(+). It carries out the reaction (S)-2,3,4,5-tetrahydrodipicolinate + NADP(+) + H2O = (2S,4S)-4-hydroxy-2,3,4,5-tetrahydrodipicolinate + NADPH + H(+). It participates in amino-acid biosynthesis; L-lysine biosynthesis via DAP pathway; (S)-tetrahydrodipicolinate from L-aspartate: step 4/4. Catalyzes the conversion of 4-hydroxy-tetrahydrodipicolinate (HTPA) to tetrahydrodipicolinate. The protein is 4-hydroxy-tetrahydrodipicolinate reductase of Ectopseudomonas mendocina (strain ymp) (Pseudomonas mendocina).